A 592-amino-acid polypeptide reads, in one-letter code: MAPGHLALFSVSDKTGLVEFARNLTALGLNLVASGGTAKALRDAGLAVRDVSELTGFPEMLGGRVKTLHPAVHAGILARNIPEDNADMARLDFNLIRVVACNLYPFVKTVASPGVTVEEAVEQIDIGGVTLLRAAAKNHARVTVVCEPEDYVVVSTEMKSSEIKDTSLETRRQLALKAFTHTAQYDEAISDYFRKQYSKGISQMPLRYGMNPHQTPAQLYTLKPKLPITVLNGAPGFINLCDALNAWQLVKELKEALGIPAAASFKHVSPAGAAVGIPLSEDEAKVCMVYDLYKTLTPISAAYARARGADRMSSFGDFVALSDVCDVPTAKIISREVSDGIIAPGYEEEALKILSKKKNGNYCVLQMDQSYKPDENEVRTLFGLHLSQKRNNGVVDKSLFSNVVTKNKDLPESALRDLIVATIAVKYTQSNSVCYAKNGQVIGIGAGQQSRIHCTRLAGDKANYWWLRHHPQVLSMKFKTGVKRAEISNAIDQYVTGTIGEDEDLIKWEALFEEVPELLTEAEKKEWVEKLTEVSISSDAFFPFRDNVDRAKRSGVAYIAAPSGSAADKVVIEACDELGIILAHTNLRLFHH.

N-acetylmethionine is present on Met-1. Positions 1 to 146 (MAPGHLALFS…KNHARVTVVC (146 aa)) constitute an MGS-like domain. Residues 1–198 (MAPGHLALFS…ISDYFRKQYS (198 aa)) are IMP cyclohydrolase. IMP is bound by residues 12 to 14 (SDK), 34 to 37 (SGGT), 64 to 67 (RVKT), 101 to 102 (CN), and 125 to 126 (DI). Catalysis depends on Lys-137, which acts as the Proton donor/acceptor; for FAICAR cyclization activity. Lys-199 is modified (N6-acetyllysine). The interval 199 to 592 (KGISQMPLRY…AHTNLRLFHH (394 aa)) is AICAR formyltransferase. 5-amino-1-(5-phospho-beta-D-ribosyl)imidazole-4-carboxamide is bound by residues 207–208 (RY), His-267, Gly-316, Asp-339, Asn-431, and Arg-451. The Proton acceptor; for AICAR formyltransferase activity role is filled by His-267. (6R)-10-formyltetrahydrofolate is bound at residue Ile-452. Phe-541 contributes to the 5-amino-1-(5-phospho-beta-D-ribosyl)imidazole-4-carboxamide binding site. (6R)-10-formyltetrahydrofolate is bound by residues Asp-546 and 565–566 (SA). 5-amino-1-(5-phospho-beta-D-ribosyl)imidazole-4-carboxamide is bound at residue Arg-588.

It belongs to the PurH family. In terms of assembly, homodimer. Associates with internalized INSR complexes on Golgi/endosomal membranes. Interacts with INSR; ATIC together with PRKAA2/AMPK2 and HACD3/PTPLAD1 is proposed to be part of a signaling network regulating INSR autophosphorylation and endocytosis.

It localises to the cytoplasm. Its subcellular location is the cytosol. It carries out the reaction (6R)-10-formyltetrahydrofolate + 5-amino-1-(5-phospho-beta-D-ribosyl)imidazole-4-carboxamide = 5-formamido-1-(5-phospho-D-ribosyl)imidazole-4-carboxamide + (6S)-5,6,7,8-tetrahydrofolate. It catalyses the reaction 10-formyldihydrofolate + 5-amino-1-(5-phospho-beta-D-ribosyl)imidazole-4-carboxamide = 5-formamido-1-(5-phospho-D-ribosyl)imidazole-4-carboxamide + 7,8-dihydrofolate. The enzyme catalyses IMP + H2O = 5-formamido-1-(5-phospho-D-ribosyl)imidazole-4-carboxamide. Its pathway is purine metabolism; IMP biosynthesis via de novo pathway; 5-formamido-1-(5-phospho-D-ribosyl)imidazole-4-carboxamide from 5-amino-1-(5-phospho-D-ribosyl)imidazole-4-carboxamide (10-formyl THF route): step 1/1. The protein operates within purine metabolism; IMP biosynthesis via de novo pathway; IMP from 5-formamido-1-(5-phospho-D-ribosyl)imidazole-4-carboxamide: step 1/1. Its activity is regulated as follows. AMP and XMP inhibit AICAR formyltransferase activity. Bifunctional enzyme that catalyzes the last two steps of purine biosynthesis. Acts as a transformylase that incorporates a formyl group to the AMP analog AICAR (5-amino-1-(5-phospho-beta-D-ribosyl)imidazole-4-carboxamide) to produce the intermediate formyl-AICAR (FAICAR). Can use both 10-formyldihydrofolate and 10-formyltetrahydrofolate as the formyl donor in this reaction. Also catalyzes the cyclization of FAICAR to inosine monophosphate (IMP). Promotes insulin receptor/INSR autophosphorylation and is involved in INSR internalization. This is Bifunctional purine biosynthesis protein ATIC (ATIC) from Pongo abelii (Sumatran orangutan).